The chain runs to 119 residues: uncharacterized protein (119 aa).

The next 3 membrane-spanning stretches (helical) occupy residues 28 to 48, 55 to 75, and 80 to 100; these read AWTT…HLVF, IEVV…NLAI, and PIGK…GIIV.

To M.tuberculosis Rv1342c.

The protein localises to the cell membrane. This is an uncharacterized protein from Mycobacterium leprae (strain TN).